A 35-amino-acid chain; its full sequence is Photosystem II reaction center protein M (35 aa).

Residues 5–25 form a helical membrane-spanning segment; sequence ILGLIATALFILIPTSFLIIL.

This sequence belongs to the PsbM family. PSII is composed of 1 copy each of membrane proteins PsbA, PsbB, PsbC, PsbD, PsbE, PsbF, PsbH, PsbI, PsbJ, PsbK, PsbL, PsbM, PsbT, PsbX, PsbY, PsbZ, Psb30/Ycf12, at least 3 peripheral proteins of the oxygen-evolving complex and a large number of cofactors. It forms dimeric complexes.

The protein localises to the plastid. It localises to the chloroplast thylakoid membrane. Its function is as follows. One of the components of the core complex of photosystem II (PSII). PSII is a light-driven water:plastoquinone oxidoreductase that uses light energy to abstract electrons from H(2)O, generating O(2) and a proton gradient subsequently used for ATP formation. It consists of a core antenna complex that captures photons, and an electron transfer chain that converts photonic excitation into a charge separation. This subunit is found at the monomer-monomer interface. In Oltmannsiellopsis viridis (Marine flagellate), this protein is Photosystem II reaction center protein M.